We begin with the raw amino-acid sequence, 178 residues long: Phosphopantetheine adenylyltransferase (178 aa).

Substrate is bound at residue Thr-17. ATP contacts are provided by residues Thr-17–Phe-18 and His-25. The substrate site is built by Lys-49, Leu-86, and Arg-100. ATP is bound by residues Gly-101 to Arg-103, Glu-111, and Leu-136 to Arg-142.

This sequence belongs to the bacterial CoaD family. Homohexamer. Mg(2+) is required as a cofactor.

The protein resides in the cytoplasm. The enzyme catalyses (R)-4'-phosphopantetheine + ATP + H(+) = 3'-dephospho-CoA + diphosphate. It participates in cofactor biosynthesis; coenzyme A biosynthesis; CoA from (R)-pantothenate: step 4/5. In terms of biological role, reversibly transfers an adenylyl group from ATP to 4'-phosphopantetheine, yielding dephospho-CoA (dPCoA) and pyrophosphate. The sequence is that of Phosphopantetheine adenylyltransferase from Zymomonas mobilis subsp. mobilis (strain ATCC 31821 / ZM4 / CP4).